A 691-amino-acid polypeptide reads, in one-letter code: Guanylate cyclase soluble subunit alpha-1 (691 aa).

Phosphoserine is present on Ser-267. A Guanylate cyclase domain is found at 480-607 (VTMLFSDIVG…GNNVTLANKF (128 aa)).

Belongs to the adenylyl cyclase class-4/guanylyl cyclase family. The active enzyme is formed by a heterodimer of an alpha and a beta subunit. Heterodimer with GUCY1B1. It depends on Mg(2+) as a cofactor. Requires Mn(2+) as cofactor.

Its subcellular location is the cytoplasm. The catalysed reaction is GTP = 3',5'-cyclic GMP + diphosphate. Activated by nitric oxide in the presence of magnesium or manganese ions. This is Guanylate cyclase soluble subunit alpha-1 (Gucy1a1) from Mus musculus (Mouse).